The following is a 745-amino-acid chain: Heterogeneous nuclear ribonucleoprotein U-like protein 2 (745 aa).

Residues 3-37 (VKRLKVTELRSELQRRGLDSRGLKMDLAQRLQEAL) form the SAP domain. Disordered stretches follow at residues 44–239 (DEAG…DEEE) and 625–664 (EEARKLLPPSEKRTNRRNNRNKRNRQNRSRGQGYVGGQRR). Residues 73–97 (GDEEEEDDDEEEDEEALLEDEDEEP) are compositionally biased toward acidic residues. The segment covering 142-161 (GEEHDNGKGEEDGPEERSGD) has biased composition (basic and acidic residues). Residue Ser-159 is modified to Phosphoserine. The residue at position 163 (Thr-163) is a Phosphothreonine. Residues Ser-166, Ser-183, Ser-186, Ser-224, and Ser-226 each carry the phosphoserine modification. A compositionally biased stretch (basic and acidic residues) spans 183–221 (SEKSKPAGSDGERRGVKRQRDEKDEHGRAYYEFREEAYH). The B30.2/SPRY domain occupies 224-417 (SKSPPPPEEE…VELNFGQKEE (194 aa)). Positions 230–239 (PEEEAKDEEE) are enriched in acidic residues. Positions 625 to 637 (EEARKLLPPSEKR) are enriched in basic and acidic residues. A compositionally biased stretch (basic residues) spans 638 to 652 (TNRRNNRNKRNRQNR). 4 positions are modified to omega-N-methylarginine: Arg-654, Arg-682, Arg-736, and Arg-745.

In terms of assembly, binds to MLF1 and retains it in the nucleus.

The protein resides in the nucleus. This is Heterogeneous nuclear ribonucleoprotein U-like protein 2 (Hnrnpul2) from Mus musculus (Mouse).